The sequence spans 465 residues: Lactaldehyde dehydrogenase (465 aa).

Glycine 220–glycine 225 provides a ligand contact to NAD(+). Residues glutamate 240 and cysteine 274 contribute to the active site.

The protein belongs to the aldehyde dehydrogenase family. Homotetramer.

It carries out the reaction (S)-lactaldehyde + NAD(+) + H2O = (S)-lactate + NADH + 2 H(+). It functions in the pathway cofactor biosynthesis; coenzyme F420 biosynthesis. Functionally, involved in F420 biosynthesis through the oxidation of lactaldehyde to lactate. The sequence is that of Lactaldehyde dehydrogenase from Methanococcus maripaludis (strain C5 / ATCC BAA-1333).